A 327-amino-acid chain; its full sequence is Interleukin-12 subunit beta (327 aa).

An N-terminal signal peptide occupies residues 1 to 22 (MHPQQLVVSWFSLVLLTSPIVA). An Ig-like C2-type domain is found at 23–106 (IWELEKNVYV…LSRSLLLLHK (84 aa)). Cys50 and Cys90 form a disulfide bridge. N-linked (GlcNAc...) asparagine glycosylation is present at Asn223. Positions 238–327 (PPKNLQLRPL…WSEWASVSCS (90 aa)) constitute a Fibronectin type-III domain.

The protein belongs to the IL-12B family. In terms of assembly, heterodimer with IL12A; disulfide-linked. The heterodimer is known as interleukin IL-12. Heterodimer with IL23A; disulfide-linked. The heterodimer is known as interleukin IL-23. Also secreted as a monomer. Interacts with NBR1; this interaction promotes IL-12 secretion.

Its subcellular location is the secreted. Functionally, cytokine that can act as a growth factor for activated T and NK cells, enhance the lytic activity of NK/lymphokine-activated killer cells, and stimulate the production of IFN-gamma by resting PBMC. Associates with IL23A to form the IL-23 interleukin, a heterodimeric cytokine which functions in innate and adaptive immunity. IL-23 may constitute with IL-17 an acute response to infection in peripheral tissues. IL-23 binds to a heterodimeric receptor complex composed of IL12RB1 and IL23R, activates the Jak-Stat signaling cascade, stimulates memory rather than naive T-cells and promotes production of pro-inflammatory cytokines. IL-23 induces autoimmune inflammation and thus may be responsible for autoimmune inflammatory diseases and may be important for tumorigenesis. In Cervus elaphus (Red deer), this protein is Interleukin-12 subunit beta (IL12B).